The sequence spans 129 residues: Glycine cleavage system H protein (129 aa).

The Lipoyl-binding domain maps to 24–106 (LVRVGISAFA…HGEGWLLVLR (83 aa)). The residue at position 65 (Lys-65) is an N6-lipoyllysine.

It belongs to the GcvH family. In terms of assembly, the glycine cleavage system is composed of four proteins: P, T, L and H. (R)-lipoate serves as cofactor.

Its function is as follows. The glycine cleavage system catalyzes the degradation of glycine. The H protein shuttles the methylamine group of glycine from the P protein to the T protein. The protein is Glycine cleavage system H protein of Parasynechococcus marenigrum (strain WH8102).